The primary structure comprises 843 residues: Aminopeptidase N (843 aa).

Residues glutamate 120 and 252 to 256 (GAMEN) contribute to the substrate site. A Zn(2+)-binding site is contributed by histidine 288. Residue glutamate 289 is the Proton acceptor of the active site. Zn(2+) is bound by residues histidine 292 and glutamate 311.

Belongs to the peptidase M1 family. Monomer. Zn(2+) serves as cofactor.

It is found in the cytoplasm. The enzyme catalyses Release of an N-terminal amino acid, Xaa-|-Yaa- from a peptide, amide or arylamide. Xaa is preferably Ala, but may be most amino acids including Pro (slow action). When a terminal hydrophobic residue is followed by a prolyl residue, the two may be released as an intact Xaa-Pro dipeptide.. Its function is as follows. Aminopeptidase with broad substrate specificity to several peptides. In Lactobacillus delbrueckii subsp. lactis, this protein is Aminopeptidase N (pepN).